A 264-amino-acid chain; its full sequence is tRNA (guanine-N(1)-)-methyltransferase (264 aa).

S-adenosyl-L-methionine-binding positions include G133 and 152–157 (LGDFVM). A compositionally biased stretch (basic and acidic residues) spans 240–251 (QRRPDLWRKARG). Residues 240-264 (QRRPDLWRKARGGEPPADESGEVRR) form a disordered region. The span at 255–264 (PADESGEVRR) shows a compositional bias: acidic residues.

This sequence belongs to the RNA methyltransferase TrmD family. Homodimer.

It is found in the cytoplasm. The enzyme catalyses guanosine(37) in tRNA + S-adenosyl-L-methionine = N(1)-methylguanosine(37) in tRNA + S-adenosyl-L-homocysteine + H(+). Functionally, specifically methylates guanosine-37 in various tRNAs. This Sorangium cellulosum (strain So ce56) (Polyangium cellulosum (strain So ce56)) protein is tRNA (guanine-N(1)-)-methyltransferase.